The sequence spans 1403 residues: Baculoviral IAP repeat-containing protein 1a (1403 aa).

BIR repeat units lie at residues 63-128 (RLKT…EFLQ), 162-228 (RLES…EFLQ), and 281-346 (RMDT…VFLQ). 4 residues coordinate Zn(2+): cysteine 315, cysteine 318, histidine 335, and cysteine 342. In terms of domain architecture, NACHT spans 464 to 758 (SVMCVEGETG…EFLAAMRLTE (295 aa)). An ATP-binding site is contributed by lysine 476.

As to quaternary structure, interacts (via NACHT domain) with APAF1 (via CARD and NACHT domains).

Its function is as follows. Anti-apoptotic protein which acts by inhibiting the activities of CASP3, CASP7 and CASP9. Can inhibit the autocleavage of pro-CASP9 and cleavage of pro-CASP3 by CASP9. Capable of inhibiting CASP9 autoproteolysis at 'Asp-315' and decreasing the rate of auto proteolysis at 'Asp-330'. Acts as a mediator of neuronal survival in pathological conditions. Prevents motor-neuron apoptosis induced by a variety of signals. The chain is Baculoviral IAP repeat-containing protein 1a (Naip1) from Mus musculus (Mouse).